The primary structure comprises 367 residues: Mitochondrial GTPase 1 (367 aa).

One can recognise a CP-type G domain in the interval 42–228 (LKTFEKLLPQ…LIDTPGIGVP (187 aa)). GTP is bound by residues 89–92 (TRKD), 160–165 (NVGKST), and Gly224.

It belongs to the TRAFAC class YlqF/YawG GTPase family. MTG1 subfamily.

It is found in the mitochondrion inner membrane. In terms of biological role, mitochondrial GTPase involved in assembly of the large ribosomal subunit. Plays a role in expression of the mitochondrial translational machinery. This is Mitochondrial GTPase 1 (MTG1) from Saccharomyces cerevisiae (strain ATCC 204508 / S288c) (Baker's yeast).